The primary structure comprises 316 residues: Coiled-coil domain-containing protein 42 (316 aa).

2 coiled-coil regions span residues 43 to 151 and 182 to 236; these read RLLE…EYSI and HHDL…SDVI.

The protein belongs to the CFAP73 family. Interacts with ODF1 and ODF2. Interacts with CCDC38. Interacts with CCDC146. Interacts with CFAP53.

The protein localises to the cytoplasm. It localises to the perinuclear region. Its subcellular location is the cytoskeleton. It is found in the cell projection. The protein resides in the cilium. The protein localises to the flagellum. It localises to the microtubule organizing center. Its subcellular location is the centrosome. In terms of biological role, essential for male fertility. Required for sperm development. The polypeptide is Coiled-coil domain-containing protein 42 (Bos taurus (Bovine)).